A 76-amino-acid chain; its full sequence is Small ribosomal subunit protein bS16 (76 aa).

The protein belongs to the bacterial ribosomal protein bS16 family.

In Helicobacter acinonychis (strain Sheeba), this protein is Small ribosomal subunit protein bS16.